The sequence spans 404 residues: Formate-dependent phosphoribosylglycinamide formyltransferase (404 aa).

N(1)-(5-phospho-beta-D-ribosyl)glycinamide is bound by residues glutamate 25 to leucine 26 and glutamate 85. Residues arginine 118, lysine 159, serine 164–glutamine 169, glutamate 199–isoleucine 202, and glutamate 207 contribute to the ATP site. In terms of domain architecture, ATP-grasp spans arginine 123–leucine 318. Residues glutamate 277 and glutamate 289 each contribute to the Mg(2+) site. Residues aspartate 296, lysine 365, and arginine 372–arginine 373 contribute to the N(1)-(5-phospho-beta-D-ribosyl)glycinamide site.

The protein belongs to the PurK/PurT family. As to quaternary structure, homodimer.

The catalysed reaction is N(1)-(5-phospho-beta-D-ribosyl)glycinamide + formate + ATP = N(2)-formyl-N(1)-(5-phospho-beta-D-ribosyl)glycinamide + ADP + phosphate + H(+). Its pathway is purine metabolism; IMP biosynthesis via de novo pathway; N(2)-formyl-N(1)-(5-phospho-D-ribosyl)glycinamide from N(1)-(5-phospho-D-ribosyl)glycinamide (formate route): step 1/1. Its function is as follows. Involved in the de novo purine biosynthesis. Catalyzes the transfer of formate to 5-phospho-ribosyl-glycinamide (GAR), producing 5-phospho-ribosyl-N-formylglycinamide (FGAR). Formate is provided by PurU via hydrolysis of 10-formyl-tetrahydrofolate. The chain is Formate-dependent phosphoribosylglycinamide formyltransferase from Burkholderia pseudomallei (strain 668).